Reading from the N-terminus, the 425-residue chain is MLDVKMIRQNPDFVKEQLGHRGVAASDIDDLLAADEKRRELIAKSEQLKSTRNQVSGEISQKKRNKEDASAEIAEMQKVSADVKTLDEERRTVDAQVQDMAAHLPNMPHPDVPVSLKEEDAVELRRIGTPRHFDFTPKAHWDIGEDLGILDFERGAKVSGSRFLYYVGDGAKLERAVYNFFLDQHEAEGYTEVLPPYMVTDESMYGTGQFPKFKEDAFRITTQDLTLIPTAEVPLVNYYRDEVIPAEKLPVYFTALSPAFREEAGSAGRDTKGLIRLHQFNKVEMVKFTKPEDSWDELEKLTNNAESLLKKLGLPYHVITLTTGDMSFTAAMTHDLEVWFPEQDKYREISSCSNCTDFQARRAHIQYRDDDGKLQFVHTLNGSGLAVGRTVAAILENYQNEDGTVTIPDVLVPYMHGKTKIEKQG.

230-232 (TAE) contacts L-serine. 261–263 (REE) provides a ligand contact to ATP. Glu-284 serves as a coordination point for L-serine. Residue 348-351 (EISS) coordinates ATP. Ser-383 contributes to the L-serine binding site.

Belongs to the class-II aminoacyl-tRNA synthetase family. Type-1 seryl-tRNA synthetase subfamily. Homodimer. The tRNA molecule binds across the dimer.

The protein localises to the cytoplasm. The catalysed reaction is tRNA(Ser) + L-serine + ATP = L-seryl-tRNA(Ser) + AMP + diphosphate + H(+). It catalyses the reaction tRNA(Sec) + L-serine + ATP = L-seryl-tRNA(Sec) + AMP + diphosphate + H(+). The protein operates within aminoacyl-tRNA biosynthesis; selenocysteinyl-tRNA(Sec) biosynthesis; L-seryl-tRNA(Sec) from L-serine and tRNA(Sec): step 1/1. Catalyzes the attachment of serine to tRNA(Ser). Is also able to aminoacylate tRNA(Sec) with serine, to form the misacylated tRNA L-seryl-tRNA(Sec), which will be further converted into selenocysteinyl-tRNA(Sec). In Lactiplantibacillus plantarum (strain ATCC BAA-793 / NCIMB 8826 / WCFS1) (Lactobacillus plantarum), this protein is Serine--tRNA ligase 2.